Here is a 704-residue protein sequence, read N- to C-terminus: Chloride intracellular channel protein 6 (704 aa).

Residues 1–13 (MAEAAEPEGVAPG) are compositionally biased toward low complexity. The segment at 1-446 (MAEAAEPEGV…EDGEASEPRA (446 aa)) is disordered. Positions 39 to 48 (EGPEGSEGAE) are enriched in acidic residues. The residue at position 44 (S44) is a Phosphoserine. Over residues 67 to 83 (RGPEAEARGTRGAHGET) the composition is skewed to basic and acidic residues. Low complexity predominate over residues 90–100 (PEGAEVPQGGE). Basic and acidic residues predominate over residues 121–147 (PRGEAQREPEDSAAPERQEEAEQRPEV). 13 tandem repeats follow at residues 157–166 (GDSVDAEGPL), 167–176 (GDNIEAEGPA), 177–186 (GDSVEAEGRV), 187–196 (GDSVDAEGPA), 197–206 (GDSVDAEGPL), 207–216 (GDNIQAEGPA), 217–226 (GDSVDAEGRV), 227–236 (GDSVDAEGPA), 237–246 (GDSVDAEGRV), 247–256 (GDSVEAGDPA), 257–266 (GDGVEAGVPA), 267–276 (GDSVEAEGPA), and 277–286 (GDSMDAEGPA). Residues 157 to 282 (GDSVDAEGPL…EGPAGDSMDA (126 aa)) are 13 X 10 AA tandem repeat of G-D-[SNG]-[VIM]-[DEQ]-A-[EAG]-[GDVE]-[PRG]-[LAVP]. Over residues 295–306 (EPQQSGDGSLSP) the composition is skewed to polar residues. 2 stretches are compositionally biased toward basic and acidic residues: residues 350–360 (ARADAGEDRVG) and 371–385 (EERRERSPEGPREEE). Phosphoserine is present on residues S397 and S442. Over residues 434-446 (GRREDGEASEPRA) the composition is skewed to basic and acidic residues. Positions 487–490 (CPFS) match the G-site motif. A helical membrane pass occupies residues 489-509 (FSQRLFMILWLKGVIFNVTTV). The GST C-terminal domain occupies 556–704 (YPKLGTQHPE…AYSDVAKRMK (149 aa)).

The protein belongs to the chloride channel CLIC family. Monomer (soluble state). Interacts with dopamine receptors DRD2, DRD3 and DRD4. Phosphorylated. In terms of tissue distribution, expressed in brain, placenta, pancreas, liver, lung, heart, kidney, liver, spleen, soleus muscle, and brown fat.

Its subcellular location is the cytoplasm. The protein localises to the cell membrane. The enzyme catalyses chloride(in) = chloride(out). Channel activity is redox- and pH-regulated. Inhibited by IAA-94. Its function is as follows. In the soluble state, catalyzes glutaredoxin-like thiol disulfide exchange reactions with reduced glutathione as electron donor. Can insert into membranes and form voltage-dependent chloride-selective channels. The channel opens upon membrane depolarization at positive voltages and closes at negative membrane voltages. May play a critical role in water-secreting cells, possibly through the regulation of chloride ion transport. The sequence is that of Chloride intracellular channel protein 6 from Homo sapiens (Human).